A 994-amino-acid polypeptide reads, in one-letter code: MSQFTSSYDPTSFEARLYAAWEAAGHFKPSGTGQPYTILLPPPNVTGTLHMGHAFQQTLMDALVRYHRMCGDDTLWQVGTDHAGIATEMVVSRNVVLEGHGETRDSLGRDGFINKVWEWKQQSGDTIERQMRRLGVSADWSRSTFTMDPQPSAAVTEAFVRWYEAGLIYRGQRLVNWDPVLKTAISDLEVENVAEEGMLWSIRYPLSDGVTYEHVEHDAAGNEILRETRDSLIVATTRPETLLGDTAVMVHPEDRRYTALIGKTVTLPLTGRHIPVIGDAYVDPTFGTGVVKVTPAHDFNDYQIGLRHRLPMIQVLDDAACIVSKTSIQSGMPSGATSDTTNTPSDPEASSAANQHDTLVMPAHLAGLDRYAARKQILADLDAQGLLVAAIPHTLQVPRGDRTGQVIEPYLTAQWFVKMETLAARGLALVERGAVTFVPPNWINTYRHWMENIQDWCISRQLWWGHRIPAWFDTQGGVYVGRSEAEVRAKHALGPEVTLTQDNDVLETWFSSQLWPFSTLGWPDPTAMAEHGYARYLPSSVLVTGFDIIFFWVARMIMATDHFTGNVPFHDVYITGLIRDAQGQKMSKSKGNVLDPLDIIDGITLDDLVAKRTTGLMQPKLAEKIAKATRKEFPEGIAPHGADALRFTIAALATHGRDIKFDLGRAEGYKNFCNKLWNATRFVLMNTADDTAHSPAQHQAGQDGQDAPRTPQPRTDAEQWILSRLTAITAEAHAQFAAYRFDLLAQALYEFAWNEFCDWFVELAKPALNSDDTQAAASTRHTLLYVLETLLRLLHPLIPFITEELWRQVAPRLGIQATTLMLRPYPQPQQLETAAFANAAADVEWLKIMVSALRRIRSTLNVPPSRRVSLLLQGDQEVDRRRITHFATALHFLLKLEHIDWLGADSAAPPSATAIVGTLKLLVPLEGLIDVDAERVRLDKEIKRVESEIDKSNGKLSNAVFVQNAPAAVVEQERSRLTEWTTQLNGLRERRATL.

The 'HIGH' region signature appears at Pro43 to His53. The span at Gln329–Ser345 shows a compositional bias: polar residues. The interval Gln329 to Gln355 is disordered. The 'KMSKS' region signature appears at Lys585 to Ser589. Lys588 contacts ATP. A disordered region spans residues Ala692 to Arg714. The span at Ala696–Ala707 shows a compositional bias: low complexity. Positions Leu928–Leu994 form a coiled coil.

It belongs to the class-I aminoacyl-tRNA synthetase family. ValS type 1 subfamily. Monomer.

It localises to the cytoplasm. The enzyme catalyses tRNA(Val) + L-valine + ATP = L-valyl-tRNA(Val) + AMP + diphosphate. Its function is as follows. Catalyzes the attachment of valine to tRNA(Val). As ValRS can inadvertently accommodate and process structurally similar amino acids such as threonine, to avoid such errors, it has a 'posttransfer' editing activity that hydrolyzes mischarged Thr-tRNA(Val) in a tRNA-dependent manner. This is Valine--tRNA ligase from Xylella fastidiosa (strain 9a5c).